The sequence spans 260 residues: 3-methyl-2-oxobutanoate hydroxymethyltransferase (260 aa).

Positions 42 and 81 each coordinate Mg(2+). Residues 42–43, D81, and K109 contribute to the 3-methyl-2-oxobutanoate site; that span reads DS. E111 lines the Mg(2+) pocket. E178 functions as the Proton acceptor in the catalytic mechanism.

It belongs to the PanB family. In terms of assembly, homodecamer; pentamer of dimers. Mg(2+) is required as a cofactor.

Its subcellular location is the cytoplasm. The catalysed reaction is 3-methyl-2-oxobutanoate + (6R)-5,10-methylene-5,6,7,8-tetrahydrofolate + H2O = 2-dehydropantoate + (6S)-5,6,7,8-tetrahydrofolate. Its pathway is cofactor biosynthesis; (R)-pantothenate biosynthesis; (R)-pantoate from 3-methyl-2-oxobutanoate: step 1/2. Functionally, catalyzes the reversible reaction in which hydroxymethyl group from 5,10-methylenetetrahydrofolate is transferred onto alpha-ketoisovalerate to form ketopantoate. This chain is 3-methyl-2-oxobutanoate hydroxymethyltransferase, found in Vesicomyosocius okutanii subsp. Calyptogena okutanii (strain HA).